The sequence spans 532 residues: SET and MYND domain-containing protein DDB_G0288495 (532 aa).

In terms of domain architecture, SET spans 25–448; the sequence is PWIEVKSVSE…ENQELLITYI (424 aa). The MYND-type; degenerate zinc-finger motif lies at 70 to 116; the sequence is CTTCFKILLESNRHNFQTCPSCFQVNYCSNYCKQYSKIETKHTELEC. A coiled-coil region spans residues 199–240; the sequence is INSKNNNEFENEEEEEEEQEQKGEGEQEENENNENNEKVKKK. Residues 204–234 form a disordered region; sequence NNEFENEEEEEEEQEQKGEGEQEENENNENN. Residues 207–217 are compositionally biased toward acidic residues; it reads FENEEEEEEEQ.

This sequence belongs to the class V-like SAM-binding methyltransferase superfamily.

Functionally, probable methyltransferase. The chain is SET and MYND domain-containing protein DDB_G0288495 from Dictyostelium discoideum (Social amoeba).